The following is a 143-amino-acid chain: Hemoglobin subunit alpha-2 (143 aa).

Residue serine 2 is modified to N-acetylserine. Residues serine 2–arginine 143 enclose the Globin domain. Histidine 60 serves as a coordination point for O2. Histidine 89 is a heme b binding site.

The protein belongs to the globin family. Hb 2 is a heterotetramer of two alpha-2 and two beta-2 chains. As to expression, red blood cells.

Involved in oxygen transport from gills to the various peripheral tissues. This is Hemoglobin subunit alpha-2 (hba2) from Gadus morhua (Atlantic cod).